Reading from the N-terminus, the 349-residue chain is uncharacterized protein (349 aa).

The THUMP domain maps to 51 to 160 (NIIKENKNNL…QDESYISIFQ (110 aa)).

This is an uncharacterized protein from Methanocaldococcus jannaschii (strain ATCC 43067 / DSM 2661 / JAL-1 / JCM 10045 / NBRC 100440) (Methanococcus jannaschii).